The primary structure comprises 126 residues: Large ribosomal subunit protein bL12 (126 aa).

Belongs to the bacterial ribosomal protein bL12 family. As to quaternary structure, homodimer. Part of the ribosomal stalk of the 50S ribosomal subunit. Forms a multimeric L10(L12)X complex, where L10 forms an elongated spine to which 2 to 4 L12 dimers bind in a sequential fashion. Binds GTP-bound translation factors.

In terms of biological role, forms part of the ribosomal stalk which helps the ribosome interact with GTP-bound translation factors. Is thus essential for accurate translation. The polypeptide is Large ribosomal subunit protein bL12 (Methylobacterium nodulans (strain LMG 21967 / CNCM I-2342 / ORS 2060)).